A 193-amino-acid polypeptide reads, in one-letter code: Ribosomal RNA large subunit methyltransferase E (193 aa).

Positions 48, 50, 67, 85, and 107 each coordinate S-adenosyl-L-methionine. Lys-147 acts as the Proton acceptor in catalysis.

The protein belongs to the class I-like SAM-binding methyltransferase superfamily. RNA methyltransferase RlmE family.

It localises to the cytoplasm. The enzyme catalyses uridine(2552) in 23S rRNA + S-adenosyl-L-methionine = 2'-O-methyluridine(2552) in 23S rRNA + S-adenosyl-L-homocysteine + H(+). Specifically methylates the uridine in position 2552 of 23S rRNA at the 2'-O position of the ribose in the fully assembled 50S ribosomal subunit. This chain is Ribosomal RNA large subunit methyltransferase E, found in Borrelia duttonii (strain Ly).